Reading from the N-terminus, the 505-residue chain is tRNA-2-methylthio-N(6)-dimethylallyladenosine synthase (505 aa).

The MTTase N-terminal domain maps to 10–126; it reads RSYEVRTYGC…LPALLDRARH (117 aa). [4Fe-4S] cluster is bound by residues cysteine 19, cysteine 55, cysteine 89, cysteine 163, cysteine 167, and cysteine 170. The region spanning 149-385 is the Radical SAM core domain; it reads RESAYAGWVS…IALQEQITLE (237 aa). Residues 388-459 form the TRAM domain; the sequence is QKLVGAEVEL…PHHLVADTPV (72 aa).

This sequence belongs to the methylthiotransferase family. MiaB subfamily. As to quaternary structure, monomer. It depends on [4Fe-4S] cluster as a cofactor.

The protein localises to the cytoplasm. The catalysed reaction is N(6)-dimethylallyladenosine(37) in tRNA + (sulfur carrier)-SH + AH2 + 2 S-adenosyl-L-methionine = 2-methylsulfanyl-N(6)-dimethylallyladenosine(37) in tRNA + (sulfur carrier)-H + 5'-deoxyadenosine + L-methionine + A + S-adenosyl-L-homocysteine + 2 H(+). Functionally, catalyzes the methylthiolation of N6-(dimethylallyl)adenosine (i(6)A), leading to the formation of 2-methylthio-N6-(dimethylallyl)adenosine (ms(2)i(6)A) at position 37 in tRNAs that read codons beginning with uridine. The polypeptide is tRNA-2-methylthio-N(6)-dimethylallyladenosine synthase (Rhodococcus jostii (strain RHA1)).